The primary structure comprises 332 residues: MFKPLTLIAASILAVTSFNAAANCDPGEIVIKFSHVTNTDKHPKGIAASLLEKRVNEEMNGKACMQVFPNSTLYDDDKVLEALLNGDVQLAAPSLSKFEKFTKKYRIFDLPFLFEDVDAVDRFQSSAKGEELKNAMTRRGVKGLEFWHNGMKQISANKPILVPADAKGLKFRVQASDVLVAQFEQIGANPQKMSFAETYGGLQTKVIDGQENTWSNIYGQKYFEVQDGTTETNHGILDYLVVTSSKWWDGLPADVRDQFAKILNEVTIERNAESNKVEELNKQYIIEAGGVVRTLTPEQRQQWVDALKPVWQKFEKDIGADLIEAALAANQK.

An N-terminal signal peptide occupies residues 1-22 (MFKPLTLIAASILAVTSFNAAA).

The protein belongs to the bacterial solute-binding protein 7 family. As to quaternary structure, the complex comprises the extracytoplasmic solute receptor protein DctP, and the two transmembrane proteins DctQ and DctM.

The protein resides in the periplasm. Functionally, part of the tripartite ATP-independent periplasmic (TRAP) transport system DctPQM involved in C4-dicarboxylates uptake. The sequence is that of C4-dicarboxylate-binding periplasmic protein DctP from Vibrio cholerae serotype O1 (strain ATCC 39315 / El Tor Inaba N16961).